A 233-amino-acid chain; its full sequence is Gamma-interferon-responsive lysosomal thiol protein (233 aa).

An N-terminal signal peptide occupies residues 1–26; it reads MVSSSLTKLVFFGCLLLLTFTDNLVA. Cys42 and Cys45 are disulfide-bonded. N-linked (GlcNAc...) asparagine glycosylation is found at Asn80 and Asn207. Positions 200–233 are cleaved as a propeptide — removed in mature form; sequence TTLPKVCNSSASMSKSPERKWKLQVSYANKATNY.

The protein belongs to the GILT family. As to quaternary structure, dimer; disulfide-linked. As to expression, expressed in the outer integument of seed coat.

It is found in the secreted. The protein localises to the lysosome. Functionally, lysosomal thiol reductase that can reduce protein disulfide bonds. May facilitate the complete unfolding of proteins destined for lysosomal degradation. The protein is Gamma-interferon-responsive lysosomal thiol protein of Arabidopsis thaliana (Mouse-ear cress).